Reading from the N-terminus, the 272-residue chain is 3-hydroxyanthranilate 3,4-dioxygenase (272 aa).

The domain A (catalytic) stretch occupies residues 1–154 (MMEWIDENSS…SEEHKTGKPS (154 aa)). R38 provides a ligand contact to O2. Residues H42, E48, and H86 each contribute to the Fe cation site. E48 contacts substrate. The substrate site is built by R90 and E100. Positions 155-169 (KESSCSINVDTETEL) are linker. A domain B region spans residues 170–272 (MEPFPLKQWL…SITVDSLANK (103 aa)).

Belongs to the 3-HAO family. Requires Fe(2+) as cofactor.

Its subcellular location is the cytoplasm. It carries out the reaction 3-hydroxyanthranilate + O2 = (2Z,4Z)-2-amino-3-carboxymuconate 6-semialdehyde. Its pathway is cofactor biosynthesis; NAD(+) biosynthesis; quinolinate from L-kynurenine: step 3/3. Catalyzes the oxidative ring opening of 3-hydroxyanthranilate to 2-amino-3-carboxymuconate semialdehyde, which spontaneously cyclizes to quinolinate. The chain is 3-hydroxyanthranilate 3,4-dioxygenase from Nematostella vectensis (Starlet sea anemone).